The following is a 196-amino-acid chain: Fe/S biogenesis protein NfuA (196 aa).

[4Fe-4S] cluster contacts are provided by Cys154 and Cys157.

Belongs to the NfuA family. In terms of assembly, homodimer. [4Fe-4S] cluster serves as cofactor.

Its function is as follows. Involved in iron-sulfur cluster biogenesis. Binds a 4Fe-4S cluster, can transfer this cluster to apoproteins, and thereby intervenes in the maturation of Fe/S proteins. Could also act as a scaffold/chaperone for damaged Fe/S proteins. This chain is Fe/S biogenesis protein NfuA, found in Blochmanniella pennsylvanica (strain BPEN).